The chain runs to 265 residues: uncharacterized protein (265 aa).

A helical; Signal-anchor for type II membrane protein membrane pass occupies residues Lys-3–Phe-23. 2 N-linked (GlcNAc...) asparagine; by host glycosylation sites follow: Asn-37 and Asn-125. Residues Asn-37–Ile-94 are a coiled coil. Residues Asn-158–Asn-257 are a coiled coil.

The protein resides in the host membrane. It is found in the virion. This is an uncharacterized protein from Acanthamoeba polyphaga (Amoeba).